Here is a 366-residue protein sequence, read N- to C-terminus: MNIRMVLLASAAAFAASTPVLAADAIVAAEPEPVEYVRVCDAYGTGYFYIPGTETCLKIEGYIRFQVNVGDNPGGDNDSDWDAVTAVRFSSRKSDTEYGPLTGVIVMQFNADNASDQDAILDSAYLDVAGFRAGLFYSWWDDGLSGETDDIGSVVTLHNSIRYQYESGTFYAGLSVDELEDGVYQGTFTPGVIPGTTDFTADDGPNNVGVAFGIGGTAGAFSYQVTGGWDVDNEDGAIRAMGTVEIGPGTFGLAGVYSSGPNSYYSSAEWAVAAEYAIKATDKLKITPGRWHGHVPEDFDGLGDAWKVGLTVDYQIVENFYAKASVQYLDPQDGEDSTSGYFACSVRSNHLVDAPGLRIGSTTISF.

A signal peptide spans 1-22; sequence MNIRMVLLASAAAFAASTPVLA.

The protein belongs to the alphaproteobacteria porin family. In terms of assembly, forms calcium-stabilized oligomers. Attached covalently to peptidoglycan.

Its subcellular location is the cell outer membrane. May act as an outer membrane pore. This chain is Outer membrane protein IIIA (ropA), found in Rhizobium leguminosarum bv. viciae.